A 926-amino-acid chain; its full sequence is Storkhead-box protein 2 (926 aa).

Disordered regions lie at residues 1-32, 338-393, 452-529, 564-586, 633-693, 723-802, and 823-926; these read MKKT…RSEK, EEEK…DIPG, EMPF…SYID, KEPS…PSYG, VKKL…SLDK, LLKS…VGTM, and TLLT…VTSV. Residues 18–32 are compositionally biased toward basic and acidic residues; it reads FSDRASDRMRSRSEK. Positions 353–378 are enriched in basic residues; that stretch reads HSGRSKKSRTHRKSHGKSRSHSKTRV. Over residues 379-393 the composition is skewed to basic and acidic residues; that stretch reads SKGDPSDGSHLDIPG. The segment covering 463–472 has biased composition (basic residues); sequence SHSKVHRSHS. Over residues 473 to 495 the composition is skewed to basic and acidic residues; that stretch reads HTQDRRSRNERSNKAKERSRSMD. The span at 518–529 shows a compositional bias: polar residues; that stretch reads QDDQTPSQSYID. 2 stretches are compositionally biased toward basic and acidic residues: residues 633–658 and 684–693; these read VKKL…EESP and HSAEPSSLDK. Positions 746-769 are enriched in polar residues; that stretch reads LGTSAAQAMPPSQRQQEPGGNQEA. Residues 785–799 show a composition bias toward basic and acidic residues; it reads GANKNAEEEKNRDDV. Composition is skewed to polar residues over residues 847–884 and 914–926; these read MDSS…QNPA and KPSN…VTSV.

This chain is Storkhead-box protein 2 (Stox2), found in Mus musculus (Mouse).